A 156-amino-acid polypeptide reads, in one-letter code: S-ribosylhomocysteine lyase (156 aa).

Fe cation-binding residues include H53, H57, and C122.

It belongs to the LuxS family. In terms of assembly, homodimer. Fe cation is required as a cofactor.

It catalyses the reaction S-(5-deoxy-D-ribos-5-yl)-L-homocysteine = (S)-4,5-dihydroxypentane-2,3-dione + L-homocysteine. In terms of biological role, involved in the synthesis of autoinducer 2 (AI-2) which is secreted by bacteria and is used to communicate both the cell density and the metabolic potential of the environment. The regulation of gene expression in response to changes in cell density is called quorum sensing. Catalyzes the transformation of S-ribosylhomocysteine (RHC) to homocysteine (HC) and 4,5-dihydroxy-2,3-pentadione (DPD). This Finegoldia magna (strain ATCC 29328 / DSM 20472 / WAL 2508) (Peptostreptococcus magnus) protein is S-ribosylhomocysteine lyase.